A 209-amino-acid chain; its full sequence is Thiamine-phosphate synthase (209 aa).

4-amino-2-methyl-5-(diphosphooxymethyl)pyrimidine-binding positions include 36–40 (QYRDK) and N68. Residues D69 and D87 each contribute to the Mg(2+) site. T106 serves as a coordination point for 4-amino-2-methyl-5-(diphosphooxymethyl)pyrimidine. 133 to 135 (SST) is a 2-[(2R,5Z)-2-carboxy-4-methylthiazol-5(2H)-ylidene]ethyl phosphate binding site. K136 contacts 4-amino-2-methyl-5-(diphosphooxymethyl)pyrimidine. 2-[(2R,5Z)-2-carboxy-4-methylthiazol-5(2H)-ylidene]ethyl phosphate is bound at residue G163.

The protein belongs to the thiamine-phosphate synthase family. The cofactor is Mg(2+).

The catalysed reaction is 2-[(2R,5Z)-2-carboxy-4-methylthiazol-5(2H)-ylidene]ethyl phosphate + 4-amino-2-methyl-5-(diphosphooxymethyl)pyrimidine + 2 H(+) = thiamine phosphate + CO2 + diphosphate. The enzyme catalyses 2-(2-carboxy-4-methylthiazol-5-yl)ethyl phosphate + 4-amino-2-methyl-5-(diphosphooxymethyl)pyrimidine + 2 H(+) = thiamine phosphate + CO2 + diphosphate. It carries out the reaction 4-methyl-5-(2-phosphooxyethyl)-thiazole + 4-amino-2-methyl-5-(diphosphooxymethyl)pyrimidine + H(+) = thiamine phosphate + diphosphate. It participates in cofactor biosynthesis; thiamine diphosphate biosynthesis; thiamine phosphate from 4-amino-2-methyl-5-diphosphomethylpyrimidine and 4-methyl-5-(2-phosphoethyl)-thiazole: step 1/1. Its function is as follows. Condenses 4-methyl-5-(beta-hydroxyethyl)thiazole monophosphate (THZ-P) and 2-methyl-4-amino-5-hydroxymethyl pyrimidine pyrophosphate (HMP-PP) to form thiamine monophosphate (TMP). In Pseudomonas paraeruginosa (strain DSM 24068 / PA7) (Pseudomonas aeruginosa (strain PA7)), this protein is Thiamine-phosphate synthase.